The sequence spans 945 residues: Valine--tRNA ligase (945 aa).

A 'HIGH' region motif is present at residues 42 to 52 (PNVTGTLHMGH). The 'KMSKS' region signature appears at 552–556 (KMSKS). An ATP-binding site is contributed by Lys555. Residues 879–945 (DKAAETARLS…VQNQLAKLKD (67 aa)) adopt a coiled-coil conformation.

Belongs to the class-I aminoacyl-tRNA synthetase family. ValS type 1 subfamily. As to quaternary structure, monomer.

The protein localises to the cytoplasm. The enzyme catalyses tRNA(Val) + L-valine + ATP = L-valyl-tRNA(Val) + AMP + diphosphate. Its function is as follows. Catalyzes the attachment of valine to tRNA(Val). As ValRS can inadvertently accommodate and process structurally similar amino acids such as threonine, to avoid such errors, it has a 'posttransfer' editing activity that hydrolyzes mischarged Thr-tRNA(Val) in a tRNA-dependent manner. The protein is Valine--tRNA ligase of Neisseria gonorrhoeae (strain ATCC 700825 / FA 1090).